The chain runs to 235 residues: Ribonuclease 3 (235 aa).

One can recognise an RNase III domain in the interval 8–137 (PAELARRIGI…VIGAIFLSGG (130 aa)). E50 provides a ligand contact to Mg(2+). D54 is a catalytic residue. 2 residues coordinate Mg(2+): D123 and E126. Residue E126 is part of the active site. In terms of domain architecture, DRBM spans 163 to 232 (DNKTAFQEWV…AGRAMREWAG (70 aa)). The segment at 211 to 235 (QGRTKKEAEQQAAGRAMREWAGRKG) is disordered. Over residues 226-235 (AMREWAGRKG) the composition is skewed to basic and acidic residues.

It belongs to the ribonuclease III family. In terms of assembly, homodimer. Mg(2+) is required as a cofactor.

It is found in the cytoplasm. It catalyses the reaction Endonucleolytic cleavage to 5'-phosphomonoester.. Digests double-stranded RNA. Involved in the processing of primary rRNA transcript to yield the immediate precursors to the large and small rRNAs (23S and 16S). Processes some mRNAs, and tRNAs when they are encoded in the rRNA operon. Processes pre-crRNA and tracrRNA of type II CRISPR loci if present in the organism. The sequence is that of Ribonuclease 3 from Heliobacterium modesticaldum (strain ATCC 51547 / Ice1).